A 320-amino-acid polypeptide reads, in one-letter code: GMP reductase (320 aa).

Residue cysteine 174 is the Thioimidate intermediate of the active site. 203–226 (IIADGGLRVNGDIAKSIRFGATMC) contributes to the NADP(+) binding site.

The protein belongs to the IMPDH/GMPR family. GuaC type 2 subfamily.

It catalyses the reaction IMP + NH4(+) + NADP(+) = GMP + NADPH + 2 H(+). Its function is as follows. Catalyzes the irreversible NADPH-dependent deamination of GMP to IMP. It functions in the conversion of nucleobase, nucleoside and nucleotide derivatives of G to A nucleotides, and in maintaining the intracellular balance of A and G nucleotides. This chain is GMP reductase, found in Mesoplasma florum (strain ATCC 33453 / NBRC 100688 / NCTC 11704 / L1) (Acholeplasma florum).